Consider the following 909-residue polypeptide: MGVFESIFGSANKKELKKIEPIIKKIESYDKSMQQLSDDELKHKTVEFKERLKNGETLDDILPEAFAVVREASYRVLGMKQYRVQLIGGVVLHQGRIAEMKTGEGKTLVATLPAYLNALSGKGVHVVTVNDYLAKRDKEWMGKVHEFLGLTVGVIVYGLDNDERRENYACDITYGTNNQYGFDYLRDNMVIYKKDKVQRGLNFAIVDEVDSILIDEARTPLIISGQGDESTDMYMRANMFANGLTGRIMDPEEDKPDIFDREFKDETVDFLVDEKRKTASLTEVGTRKAEEYFGVENLSDPNNMELAHHINQALKANNTMKRDIDYVVKDDEILIVDEFTGRIMEGRRYSDGLHQAIEAKEGVEVKSESKTLATVTFQNYFRMYNKLSGMTGTAKTEEAEFNEIYKMDVVEIPTNKPVARVDEQDRVYINENAKFNAIVEEIKEIHKTGQPILVGTISIEVSERLSNLLKKNGIKHDVLNAKQHEREAEIVAQAGMFDKVTIATNMAGRGTDILLGGNPDFMAKHDMKKQGYGDYVIESLDSFLPSTDEELVAARNVYNELHKKYKKMTDENKKKVLEVGGLYIIGTERHESRRIDNQLRGRSGRQGDPGRSRFFVSLGDNLMRLFGGETIQKYAESGKFPEDEPMEFRTITKAIERAQTKVESNNFGIRKNVLKYDDVMNAQRKVIYTERDKVLDGEDMHESIVAMIKDIISNAIDTYCQDPKSENWEMEALMTYLNTFIPEGTLDLTRLNSYNKKTFTDYVIQKALEVYNAKEEAIGKEKFREIERVILLMVVDRKWMDHIDAMDQLRQGIGLRAFGQQDPVRAYNNEGFEMFEDMNHSIKEDTVRGMFNVQPVEEIERKQVAHETSATGGEEEINKPVVKGKKIGRNDPCPCGSGKKYKNCCGKNR.

Residues glutamine 85, glycine 103–threonine 107, and aspartate 512 each bind ATP. The tract at residues histidine 866 to lysine 899 is disordered. Zn(2+) is bound by residues cysteine 893, cysteine 895, cysteine 904, and cysteine 905.

This sequence belongs to the SecA family. As to quaternary structure, monomer and homodimer. Part of the essential Sec protein translocation apparatus which comprises SecA, SecYEG and auxiliary proteins SecDF. Other proteins may also be involved. The cofactor is Zn(2+).

The protein localises to the cell membrane. It is found in the cytoplasm. The enzyme catalyses ATP + H2O + cellular proteinSide 1 = ADP + phosphate + cellular proteinSide 2.. Part of the Sec protein translocase complex. Interacts with the SecYEG preprotein conducting channel. Has a central role in coupling the hydrolysis of ATP to the transfer of proteins into and across the cell membrane, serving as an ATP-driven molecular motor driving the stepwise translocation of polypeptide chains across the membrane. The protein is Protein translocase subunit SecA of Finegoldia magna (strain ATCC 29328 / DSM 20472 / WAL 2508) (Peptostreptococcus magnus).